Here is a 789-residue protein sequence, read N- to C-terminus: Protein FLOWERING LOCUS D (789 aa).

The disordered stretch occupies residues M1–N23. An SWIRM domain is found at N76 to K177. Residues S195, E214, R216, R222, and G240–V243 contribute to the FAD site. A Glycyl lysine isopeptide (Lys-Gly) (interchain with G-Cter in SUMO) cross-link involves residue K287. FAD-binding positions include E595, T604–M605, and G607–G612. Residues K693 and K770 each participate in a glycyl lysine isopeptide (Lys-Gly) (interchain with G-Cter in SUMO) cross-link.

This sequence belongs to the flavin monoamine oxidase family. Interacts with HDA6. FAD is required as a cofactor. Post-translationally, sumoylated at Lys-287, Lys-693 and Lys-770 by SIZ1. Sumoylation alters its activity and the histone H4 acetylation status of FLC locus, promoting FLC expression.

In terms of biological role, probable histone demethylase that promotes flowering independently of the photoperiod and vernalization pathways by repressing FLOWERING LOCUS C (FLC), a floral repressor that blocks the transition from vegetative to reproductive development. Probably mediates histone H3 'Lys-4' demethylation at FLC locus. Seems to act in partial redundancy with LDL1 and LDL2 to repress FLC expression. Required for histone H4 deacetylation of FLC locus. May be a component of the histone deacetylase complex. Forms a histone deacetylase complex with HDA5, HDA6 and MSI4/FVE that represses FLC gene expression to control flowering time. Required for systemic acquired resistance (SAR) toward pathogenic bacteria (e.g. Pseudomonas syringae pv tomato DC3000 (avrPto)). Together with FLD and MSI4/FVE, contributes to dehydroabietinal-dependent (DA, a diterpenoid tricyclic diterpene) activation of flowering ans SAR. In Arabidopsis thaliana (Mouse-ear cress), this protein is Protein FLOWERING LOCUS D.